The following is a 66-amino-acid chain: Large ribosomal subunit protein bL33c (66 aa).

Belongs to the bacterial ribosomal protein bL33 family.

The protein resides in the plastid. It localises to the chloroplast. This Coffea arabica (Arabian coffee) protein is Large ribosomal subunit protein bL33c.